The sequence spans 446 residues: MEKYLSVTTLTKYLKMKFDKDPYLERVYLTGQVSNFRKRPTHQYFSLKDDHAVIQATIWSGIYQKLGFDLEEGMKINVIGRVQVYEPSGSYSIIIEKAEPDGVGALAIQFEQLKKKLTEEGLFQERFKQALPQFSKRIGVVTSRSGAVIRDIITTVSRRFPGVDILLYPTKVQGEGAAEEIARNIARANQRDDLDLLIIGRGGGSIEDLWAFNEEIVVRAIFESRLPVISSVGHETDVTLADFVADRRAATPTAAAELATPVTKLDVLAHLQNQEKRMVTAVRNVLSKKQEALKKCSQSVIFRQPERLYDGYLQRLDQLQLRLKQSLRTRISDNKQLVQARTHQLVQLSPVTKIQRYQDRLGQLDKLLGSQMALVYDAKVAEVKRLSEALLMLDTSRIVARGYAIVKKEESVVDSVESLKKKDQVTLLMRDGQVELEVKDVKTKEI.

It belongs to the XseA family. In terms of assembly, heterooligomer composed of large and small subunits.

The protein resides in the cytoplasm. It carries out the reaction Exonucleolytic cleavage in either 5'- to 3'- or 3'- to 5'-direction to yield nucleoside 5'-phosphates.. Functionally, bidirectionally degrades single-stranded DNA into large acid-insoluble oligonucleotides, which are then degraded further into small acid-soluble oligonucleotides. The protein is Exodeoxyribonuclease 7 large subunit of Streptococcus pneumoniae serotype 19F (strain G54).